Here is a 395-residue protein sequence, read N- to C-terminus: MTVPATSTRKDLMIVNMGPHHPSMHGVLRLIVTLDGEDVIDCEPILGYLHRGMEKIAENRTIIQYLPYVTRWDYLATMFTEAITVNAPEQLGNIQVPKRASYIRVIMLELSRIASHLLWLGPFMADIGAQTPFFYIFRERELLYDLFEAATGMRMMHNYFRIGGVAADLPHGWVDKCLDFCDYFLTGVAEYQKLITRNPIFLERVEGVGIIGGEEAINWGLSGPMLRASGIRWDLRKVDHYECYDEFDWEVQWQKEGDSLARYLVRISEMTESIKIIQQALEGIPGGPYENLEVRRFDRARDAEWNDFDYRFISKKPSPTFELSKQELYARVEAPKGELGIFLIGDNSVFPWRWKIRPPGFINLQILPQLVKRMKLADIMTILGSIDIIMGEVDR.

This sequence belongs to the complex I 49 kDa subunit family. NDH is composed of at least 16 different subunits, 5 of which are encoded in the nucleus.

Its subcellular location is the plastid. The protein resides in the chloroplast thylakoid membrane. It carries out the reaction a plastoquinone + NADH + (n+1) H(+)(in) = a plastoquinol + NAD(+) + n H(+)(out). The enzyme catalyses a plastoquinone + NADPH + (n+1) H(+)(in) = a plastoquinol + NADP(+) + n H(+)(out). NDH shuttles electrons from NAD(P)H:plastoquinone, via FMN and iron-sulfur (Fe-S) centers, to quinones in the photosynthetic chain and possibly in a chloroplast respiratory chain. The immediate electron acceptor for the enzyme in this species is believed to be plastoquinone. Couples the redox reaction to proton translocation, and thus conserves the redox energy in a proton gradient. The protein is NAD(P)H-quinone oxidoreductase subunit H, chloroplastic of Chloranthus spicatus (Chulantree).